We begin with the raw amino-acid sequence, 208 residues long: Ribonuclease HII (208 aa).

Residues 18–208 (GFYAGVDEVG…RPVKERLEAC (191 aa)) form the RNase H type-2 domain. The a divalent metal cation site is built by Asp24, Glu25, and Asp116.

The protein belongs to the RNase HII family. Mn(2+) serves as cofactor. Mg(2+) is required as a cofactor.

It is found in the cytoplasm. The catalysed reaction is Endonucleolytic cleavage to 5'-phosphomonoester.. Endonuclease that specifically degrades the RNA of RNA-DNA hybrids. This is Ribonuclease HII from Shewanella loihica (strain ATCC BAA-1088 / PV-4).